We begin with the raw amino-acid sequence, 110 residues long: UPF0122 protein BPUM_1495 (110 aa).

Belongs to the UPF0122 family.

In terms of biological role, might take part in the signal recognition particle (SRP) pathway. This is inferred from the conservation of its genetic proximity to ftsY/ffh. May be a regulatory protein. This is UPF0122 protein BPUM_1495 from Bacillus pumilus (strain SAFR-032).